We begin with the raw amino-acid sequence, 338 residues long: 4-hydroxythreonine-4-phosphate dehydrogenase (338 aa).

His-140 and Thr-141 together coordinate substrate. Residues His-172, His-217, and His-271 each coordinate a divalent metal cation. Substrate-binding residues include Lys-279, Asn-288, and Arg-297.

Belongs to the PdxA family. In terms of assembly, homodimer. The cofactor is a divalent metal cation.

It localises to the cytoplasm. It carries out the reaction 4-(phosphooxy)-L-threonine + NAD(+) = 3-amino-2-oxopropyl phosphate + CO2 + NADH. Its pathway is cofactor biosynthesis; pyridoxine 5'-phosphate biosynthesis; pyridoxine 5'-phosphate from D-erythrose 4-phosphate: step 4/5. In terms of biological role, catalyzes the NAD(P)-dependent oxidation of 4-(phosphooxy)-L-threonine (HTP) into 2-amino-3-oxo-4-(phosphooxy)butyric acid which spontaneously decarboxylates to form 3-amino-2-oxopropyl phosphate (AHAP). The chain is 4-hydroxythreonine-4-phosphate dehydrogenase from Prosthecochloris aestuarii (strain DSM 271 / SK 413).